The following is a 737-amino-acid chain: FYVE, RhoGEF and PH domain-containing protein 3 (737 aa).

The interval 1 to 151 is disordered; it reads MESGGGSSTP…KADKDAGLAQ (151 aa). Over residues 126–136 the composition is skewed to acidic residues; sequence ADSDVGEEPDS. Ser-128 is modified (phosphoserine). A DH domain is found at 157–341; that stretch reads KLLHIAQELL…STAANHSNAA (185 aa). The region spanning 370 to 469 is the PH 1 domain; that stretch reads ELIKEGQIQK…WIQIIQATIE (100 aa). The disordered stretch occupies residues 487 to 533; the sequence is QDEDPSLSPDMPITSTSPVEPVVTTEGGSGAAGLEPRKLSSKTRRDK. Low complexity predominate over residues 500–512; that stretch reads TSTSPVEPVVTTE. The segment covering 521-533 has biased composition (basic and acidic residues); sequence EPRKLSSKTRRDK. The segment at 532–588 adopts an FYVE-type zinc-finger fold; the sequence is DKEKQSCKSCGETFNSITKRRHHCKLCGVVICGKCSEFKAENSRQSRVCRECFLTQP. Zn(2+) contacts are provided by Cys-538, Cys-541, Cys-555, Cys-558, Cys-563, Cys-566, Cys-580, and Cys-583. Disordered regions lie at residues 589–620 and 713–737; these read VAPE…SLLC and AARG…AAAP. A PH 2 domain is found at 616–715; the sequence is PSLLCGPLRL…WLETLSTAAR (100 aa).

The protein resides in the cytoplasm. It localises to the cytoskeleton. Promotes the formation of filopodia. May activate CDC42, a member of the Ras-like family of Rho- and Rac proteins, by exchanging bound GDP for free GTP. Plays a role in regulating the actin cytoskeleton and cell shape. This is FYVE, RhoGEF and PH domain-containing protein 3 (FGD3) from Pongo abelii (Sumatran orangutan).